The sequence spans 92 residues: Conotoxin Mr15.2 (92 aa).

Positions Met-1–Phe-20 are cleaved as a signal peptide. A propeptide spanning residues Asp-21–Arg-53 is cleaved from the precursor. The tract at residues Gly-30–Ser-49 is disordered.

The protein belongs to the conotoxin N superfamily. Post-translationally, contains 4 disulfide bonds. Expressed by the venom duct.

The protein localises to the secreted. The protein is Conotoxin Mr15.2 of Conus marmoreus (Marble cone).